Here is a 147-residue protein sequence, read N- to C-terminus: uncharacterized protein (147 aa).

This is an uncharacterized protein from Mycoplasma genitalium (strain ATCC 33530 / DSM 19775 / NCTC 10195 / G37) (Mycoplasmoides genitalium).